Here is a 538-residue protein sequence, read N- to C-terminus: C-22 sterol desaturase ERG5 (538 aa).

A helical transmembrane segment spans residues Leu46–Ile66. Residues Lys164 and Lys198 each participate in a glycyl lysine isopeptide (Lys-Gly) (interchain with G-Cter in ubiquitin) cross-link. Residue Cys476 coordinates heme.

The protein belongs to the cytochrome P450 family. Interacts with ERG28. The cofactor is heme.

Its subcellular location is the endoplasmic reticulum membrane. The enzyme catalyses 5-dehydroepisterol + NADPH + O2 + H(+) = ergosta-5,7,22,24(28)-tetraen-3beta-ol + NADP(+) + 2 H2O. It functions in the pathway steroid metabolism; ergosterol biosynthesis; ergosterol from zymosterol: step 4/5. C-22 sterol desaturase; part of the third module of ergosterol biosynthesis pathway that includes the late steps of the pathway. ERG5 converts 5-dehydroepisterol into ergosta-5,7,22,24(28)-tetraen-3beta-ol by forming the C-22(23) double bond in the sterol side chain. The third module or late pathway involves the ergosterol synthesis itself through consecutive reactions that mainly occur in the endoplasmic reticulum (ER) membrane. Firstly, the squalene synthase ERG9 catalyzes the condensation of 2 farnesyl pyrophosphate moieties to form squalene, which is the precursor of all steroids. Squalene synthase is crucial for balancing the incorporation of farnesyl diphosphate (FPP) into sterol and nonsterol isoprene synthesis. Secondly, the squalene epoxidase ERG1 catalyzes the stereospecific oxidation of squalene to (S)-2,3-epoxysqualene, which is considered to be a rate-limiting enzyme in steroid biosynthesis. Then, the lanosterol synthase ERG7 catalyzes the cyclization of (S)-2,3 oxidosqualene to lanosterol, a reaction that forms the sterol core. In the next steps, lanosterol is transformed to zymosterol through a complex process involving various demethylation, reduction and desaturation reactions. The lanosterol 14-alpha-demethylase ERG11 (also known as CYP51) catalyzes C14-demethylation of lanosterol to produce 4,4'-dimethyl cholesta-8,14,24-triene-3-beta-ol, which is critical for ergosterol biosynthesis. The C-14 reductase ERG24 reduces the C14=C15 double bond of 4,4-dimethyl-cholesta-8,14,24-trienol to produce 4,4-dimethyl-cholesta-8,24-dienol. 4,4-dimethyl-cholesta-8,24-dienol is substrate of the C-4 demethylation complex ERG25-ERG26-ERG27 in which ERG25 catalyzes the three-step monooxygenation required for the demethylation of 4,4-dimethyl and 4alpha-methylsterols, ERG26 catalyzes the oxidative decarboxylation that results in a reduction of the 3-beta-hydroxy group at the C-3 carbon to an oxo group, and ERG27 is responsible for the reduction of the keto group on the C-3. ERG28 has a role as a scaffold to help anchor ERG25, ERG26 and ERG27 to the endoplasmic reticulum and ERG29 regulates the activity of the iron-containing C4-methylsterol oxidase ERG25. Then, the sterol 24-C-methyltransferase ERG6 catalyzes the methyl transfer from S-adenosyl-methionine to the C-24 of zymosterol to form fecosterol. The C-8 sterol isomerase ERG2 catalyzes the reaction which results in unsaturation at C-7 in the B ring of sterols and thus converts fecosterol to episterol. The sterol-C5-desaturase ERG3 then catalyzes the introduction of a C-5 double bond in the B ring to produce 5-dehydroepisterol. The C-22 sterol desaturase ERG5 further converts 5-dehydroepisterol into ergosta-5,7,22,24(28)-tetraen-3beta-ol by forming the C-22(23) double bond in the sterol side chain. Finally, ergosta-5,7,22,24(28)-tetraen-3beta-ol is substrate of the C-24(28) sterol reductase ERG4 to produce ergosterol. The sequence is that of C-22 sterol desaturase ERG5 from Saccharomyces cerevisiae (strain ATCC 204508 / S288c) (Baker's yeast).